A 272-amino-acid chain; its full sequence is Transcription factor PU.1 (272 aa).

Residues serine 126–glutamate 165 form a disordered region. Serine 142 and serine 148 each carry phosphoserine. Residues leucine 155–glutamate 165 are compositionally biased toward low complexity. A DNA-binding region (ETS) is located at residues isoleucine 172–serine 255. 4 residues coordinate DNA: lysine 219, arginine 232, arginine 235, and lysine 245.

This sequence belongs to the ETS family. As to quaternary structure, binds DNA as a monomer. Can form homomers. Directly interacts with CEBPD/NF-IL6-beta; this interaction does not affect DNA-binding properties of each partner. Interacts with NONO/p54(nrb). Interacts with RUNX1/AML1. Interacts with GFI1; the interaction represses SPI1 transcriptional activity, hence blocks SPI1-induced macrophage differentiation of myeloid progenitor cells. Interacts with CEBPE. Interacts with IRF4/Pip and IRF8. Interacts with JUN. Interacts with RB1. Interacts with TBP. As to expression, expressed in spleen, thymus and bone-marrow macrophages.

It localises to the nucleus. With respect to regulation, transcriptional activity at macrophage-specific genes is inhibited by interaction with GFI1, which results in inhibition of SPI1-induced macrophage differentiation of myeloid progenitor cells, but not that of the granulocyte lineage. In terms of biological role, pioneer transcription factor, which controls hematopoietic cell fate by decompacting stem cell heterochromatin and allowing other transcription factors to enter otherwise inaccessible genomic sites. Once in open chromatin, can directly control gene expression by binding genetic regulatory elements and can also more broadly influence transcription by recruiting transcription factors, such as interferon regulatory factors (IRFs), to otherwise inaccessible genomic regions. Transcriptionally activates genes important for myeloid and lymphoid lineages, such as CSF1R. Transcriptional activation from certain promoters, possibly containing low affinity binding sites, is achieved cooperatively with other transcription factors. FCER1A transactivation is achieved in cooperation with GATA1. May be particularly important for the pro- to pre-B cell transition. Binds (via the ETS domain) onto the purine-rich DNA core sequence 5'-GAGGAA-3', also known as the PU-box. In vitro can bind RNA and interfere with pre-mRNA splicing. The polypeptide is Transcription factor PU.1 (Spi1) (Mus musculus (Mouse)).